Consider the following 325-residue polypeptide: Beta-ketoacyl-[acyl-carrier-protein] synthase III (325 aa).

Residues Cys-119 and His-252 contribute to the active site. Positions 253–257 (QANIR) are ACP-binding. Residue Asn-282 is part of the active site.

It belongs to the thiolase-like superfamily. FabH family. Homodimer.

It is found in the cytoplasm. It carries out the reaction malonyl-[ACP] + acetyl-CoA + H(+) = 3-oxobutanoyl-[ACP] + CO2 + CoA. Its pathway is lipid metabolism; fatty acid biosynthesis. In terms of biological role, catalyzes the condensation reaction of fatty acid synthesis by the addition to an acyl acceptor of two carbons from malonyl-ACP. Catalyzes the first condensation reaction which initiates fatty acid synthesis and may therefore play a role in governing the total rate of fatty acid production. Possesses both acetoacetyl-ACP synthase and acetyl transacylase activities. Its substrate specificity determines the biosynthesis of branched-chain and/or straight-chain of fatty acids. This chain is Beta-ketoacyl-[acyl-carrier-protein] synthase III, found in Delftia acidovorans (strain DSM 14801 / SPH-1).